The following is a 199-amino-acid chain: MTPKLILASSSPFRRMLMENAGLSFEAHAARIDERAVEAPLENAGAKPDAVALVLARAKAEEVSSRFPDSLVIGSDQTMSLGDSVFHKPTDLADAASHLQALSGVTHRLNSAVAIVSDGVVLWEHLAHAQLTMRPLTVEFIARHLARVGERALSSVGAYQLEGEGIQLFEKIEGDYFTILGLPMLPLLKKLRELGAIDG.

The active-site Proton acceptor is Asp-76.

It belongs to the Maf family. YceF subfamily. A divalent metal cation is required as a cofactor.

It is found in the cytoplasm. The enzyme catalyses N(7)-methyl-GTP + H2O = N(7)-methyl-GMP + diphosphate + H(+). In terms of biological role, nucleoside triphosphate pyrophosphatase that hydrolyzes 7-methyl-GTP (m(7)GTP). May have a dual role in cell division arrest and in preventing the incorporation of modified nucleotides into cellular nucleic acids. This is 7-methyl-GTP pyrophosphatase from Rhizobium johnstonii (strain DSM 114642 / LMG 32736 / 3841) (Rhizobium leguminosarum bv. viciae).